Consider the following 715-residue polypeptide: DNA-directed RNA polymerase subunit beta' (715 aa).

Zn(2+) is bound by residues Cys69, Cys71, Cys87, and Cys90. A disordered region spans residues 244 to 272; sequence APESQSEVIEAQGPVPQAEEEKQRDQSIQ. The Mg(2+) site is built by Asp520, Asp522, and Asp524.

Belongs to the RNA polymerase beta' chain family. RpoC1 subfamily. As to quaternary structure, in plastids the minimal PEP RNA polymerase catalytic core is composed of four subunits: alpha, beta, beta', and beta''. When a (nuclear-encoded) sigma factor is associated with the core the holoenzyme is formed, which can initiate transcription. It depends on Mg(2+) as a cofactor. Zn(2+) is required as a cofactor.

It is found in the plastid. The protein resides in the chloroplast. It catalyses the reaction RNA(n) + a ribonucleoside 5'-triphosphate = RNA(n+1) + diphosphate. Its function is as follows. DNA-dependent RNA polymerase catalyzes the transcription of DNA into RNA using the four ribonucleoside triphosphates as substrates. The protein is DNA-directed RNA polymerase subunit beta' of Zygnema circumcarinatum (Green alga).